Reading from the N-terminus, the 481-residue chain is tRNA:m(4)X modification enzyme TRM13 homolog (481 aa).

The CHHC U11-48K-type zinc finger occupies 56–83 (RILCPLDPKHTVYEDQLAKHLKKCNSRE). Zn(2+) contacts are provided by cysteine 59, histidine 65, histidine 75, and cysteine 79. Residues 113–140 (SLSEEQLENLIKKLRKASEGLNSTHEDH) adopt a coiled-coil conformation. Disordered stretches follow at residues 296–319 (AKRI…SEKD) and 379–414 (LEGS…TDSL). Over residues 385–407 (TPERKDAQRDENEEHDDGGDRLT) the composition is skewed to basic and acidic residues.

The protein belongs to the methyltransferase TRM13 family.

It catalyses the reaction cytidine(4) in tRNA(Pro) + S-adenosyl-L-methionine = 2'-O-methylcytidine(4) in tRNA(Pro) + S-adenosyl-L-homocysteine + H(+). The catalysed reaction is cytidine(4) in tRNA(Gly)(GCC) + S-adenosyl-L-methionine = 2'-O-methylcytidine(4) in tRNA(Gly)(GCC) + S-adenosyl-L-homocysteine + H(+). The enzyme catalyses adenosine(4) in tRNA(His) + S-adenosyl-L-methionine = 2'-O-methyladenosine(4) in tRNA(His) + S-adenosyl-L-homocysteine + H(+). In terms of biological role, tRNA methylase which 2'-O-methylates cytidine(4) in tRNA(Pro) and tRNA(Gly)(GCC), and adenosine(4) in tRNA(His). The polypeptide is tRNA:m(4)X modification enzyme TRM13 homolog (Trmt13) (Mus musculus (Mouse)).